A 605-amino-acid chain; its full sequence is Sulfite reductase [NADPH] flavoprotein alpha-component (605 aa).

The Flavodoxin-like domain maps to 70–208; the sequence is LTIIYASQTG…PAAEWRVKAL (139 aa). FMN-binding positions include 76–81, 123–126, and 159–168; these read SQTGNA, STHG, and LGDSSYEFFC. The region spanning 240-454 is the FAD-binding FR-type domain; sequence QNPYEATLLT…VEENNNFKLP (215 aa). FAD is bound by residues threonine 328, glycine 362, 392 to 395, 410 to 412, and 425 to 428; these read RLYS, TVG, and GGAS. NADP(+) is bound by residues 525–526, 531–535, and aspartate 567; these read SR and KVYVQ. Tyrosine 605 serves as a coordination point for FAD.

This sequence belongs to the NADPH-dependent sulphite reductase flavoprotein subunit CysJ family. The protein in the N-terminal section; belongs to the flavodoxin family. It in the C-terminal section; belongs to the flavoprotein pyridine nucleotide cytochrome reductase family. As to quaternary structure, alpha(8)-beta(8). The alpha component is a flavoprotein, the beta component is a hemoprotein. FAD serves as cofactor. FMN is required as a cofactor.

The enzyme catalyses hydrogen sulfide + 3 NADP(+) + 3 H2O = sulfite + 3 NADPH + 4 H(+). It functions in the pathway sulfur metabolism; hydrogen sulfide biosynthesis; hydrogen sulfide from sulfite (NADPH route): step 1/1. Functionally, component of the sulfite reductase complex that catalyzes the 6-electron reduction of sulfite to sulfide. This is one of several activities required for the biosynthesis of L-cysteine from sulfate. The flavoprotein component catalyzes the electron flow from NADPH -&gt; FAD -&gt; FMN to the hemoprotein component. This Photobacterium profundum (strain SS9) protein is Sulfite reductase [NADPH] flavoprotein alpha-component.